The chain runs to 629 residues: Putative polypeptide N-acetylgalactosaminyltransferase 10 (629 aa).

Over 1 to 12 (MGLSRYLSRRHH) the chain is Cytoplasmic. Residues 13–33 (WVIQYCALLLFLYFIYSYVAV) traverse the membrane as a helical; Signal-anchor for type II membrane protein segment. The Lumenal segment spans residues 34–629 (SNDAPRLNEE…RQANEHKELE (596 aa)). N-linked (GlcNAc...) asparagine glycosylation is found at Asn143 and Asn177. Intrachain disulfides connect Cys154/Cys385, Cys376/Cys454, Cys493/Cys510, Cys539/Cys556, and Cys582/Cys598. The interval 163-275 (LPTVSVIFPF…YNWLPPLLDP (113 aa)) is catalytic subdomain A. 2 residues coordinate substrate: Asp204 and Arg236. 2 residues coordinate Mn(2+): Asp259 and His261. The interval 331–393 (PFDSPVMAGG…PCSRVAHIYR (63 aa)) is catalytic subdomain B. Trp362 lines the substrate pocket. His390 serves as a coordination point for Mn(2+). Arg393 contributes to the substrate binding site. The flexible loop stretch occupies residues 393–406 (RCKYAPFKNAGMGD). Positions 526–629 (TRWHDIRPKG…RQANEHKELE (104 aa)) constitute a Ricin B-type lectin domain.

Belongs to the glycosyltransferase 2 family. GalNAc-T subfamily. Mn(2+) serves as cofactor.

It localises to the golgi apparatus membrane. The enzyme catalyses L-seryl-[protein] + UDP-N-acetyl-alpha-D-galactosamine = a 3-O-[N-acetyl-alpha-D-galactosaminyl]-L-seryl-[protein] + UDP + H(+). It catalyses the reaction L-threonyl-[protein] + UDP-N-acetyl-alpha-D-galactosamine = a 3-O-[N-acetyl-alpha-D-galactosaminyl]-L-threonyl-[protein] + UDP + H(+). It functions in the pathway protein modification; protein glycosylation. In terms of biological role, may catalyze the initial reaction in O-linked oligosaccharide biosynthesis, the transfer of an N-acetyl-D-galactosamine residue to a serine or threonine residue on the protein receptor. This chain is Putative polypeptide N-acetylgalactosaminyltransferase 10, found in Caenorhabditis briggsae.